The primary structure comprises 298 residues: UPF0696 protein C11orf68 homolog (298 aa).

Over residues 1–10 (MAAAAAAVAG) the composition is skewed to low complexity. Residues 1–66 (MAAAAAAVAG…EDSPGGREDG (66 aa)) are disordered. Positions 11–25 (AGRGGGGGGGGGGAA) are enriched in gly residues. The span at 41–50 (ERSEGRRMEP) shows a compositional bias: basic and acidic residues.

The protein belongs to the UPF0696 family.

In Mus musculus (Mouse), this protein is UPF0696 protein C11orf68 homolog (Bles03).